The chain runs to 364 residues: Geranylfarnesyl diphosphate synthase, chloroplastic (364 aa).

The transit peptide at 1–51 (MSHCTIFLYKYFPGKPRYQHCSFLHPLNHKLKSLFLPITGSRFLSNSTFSV) directs the protein to the chloroplast. 3 residues coordinate isopentenyl diphosphate: Lys72, Lys111, and His143. Mg(2+)-binding residues include Asp150 and Asp156. Residue Arg161 participates in dimethylallyl diphosphate binding. Arg162 serves as a coordination point for isopentenyl diphosphate. Dimethylallyl diphosphate is bound by residues Lys249, Thr250, Gln287, Asp294, Lys304, and Lys314.

Belongs to the FPP/GGPP synthase family. As to quaternary structure, monomer. The cofactor is Mg(2+). Strongly expressed in glandular trichomes, and, at low levels, in leaves, stems and flowers.

The protein resides in the plastid. Its subcellular location is the chloroplast. It carries out the reaction isopentenyl diphosphate + (2E,6E,10E)-geranylgeranyl diphosphate = (2E,6E,10E,14E)-geranylfarnesyl diphosphate + diphosphate. It catalyses the reaction 2 isopentenyl diphosphate + (2E,6E)-farnesyl diphosphate = (2E,6E,10E,14E)-geranylfarnesyl diphosphate + 2 diphosphate. The enzyme catalyses 3 isopentenyl diphosphate + (2E)-geranyl diphosphate = (2E,6E,10E,14E)-geranylfarnesyl diphosphate + 3 diphosphate. The catalysed reaction is 4 isopentenyl diphosphate + dimethylallyl diphosphate = (2E,6E,10E,14E)-geranylfarnesyl diphosphate + 4 diphosphate. The protein operates within secondary metabolite biosynthesis; terpenoid biosynthesis. It functions in the pathway isoprenoid biosynthesis. In terms of biological role, involved in the biosynthesis of leucosceptrane sesterterpenoids natural products, which are playing defensive roles toward herbivorus insects (e.g. Spodoptera exigua). Catalyzes the condensation of isopentenyl pyrophosphate (IDP) with the allylic pyrophosphates to yield geranylfarnesyl diphosphate (GFDP), the C(25) prenyl diphosphate precursor to all sesterterpenoids. Geranylgeranyl diphosphate (GGPP) is the preferred substrate, however dimethylallyl diphosphate (DMADP), farnesyl diphosphate (FDP) and geranyl diphosphate (GDP) can also be used as allylic substrate. This chain is Geranylfarnesyl diphosphate synthase, chloroplastic, found in Leucosceptrum canum (Hairy white-wand).